Reading from the N-terminus, the 305-residue chain is Protoheme IX farnesyltransferase (305 aa).

9 consecutive transmembrane segments (helical) span residues 31-51 (IQVL…KGHV), 53-73 (PLLL…ANAF), 98-118 (ILPW…FAVL), 124-144 (LFAA…YTLW), 153-173 (IVIG…AVTG), 181-201 (VLFG…AMMI), 221-241 (ATAR…LVLY), 242-262 (PLGT…LWLI), and 285-305 (SIFY…FLFA).

The protein belongs to the UbiA prenyltransferase family. Protoheme IX farnesyltransferase subfamily.

The protein resides in the cell inner membrane. It carries out the reaction heme b + (2E,6E)-farnesyl diphosphate + H2O = Fe(II)-heme o + diphosphate. Its pathway is porphyrin-containing compound metabolism; heme O biosynthesis; heme O from protoheme: step 1/1. Converts heme B (protoheme IX) to heme O by substitution of the vinyl group on carbon 2 of heme B porphyrin ring with a hydroxyethyl farnesyl side group. This Gloeobacter violaceus (strain ATCC 29082 / PCC 7421) protein is Protoheme IX farnesyltransferase.